Reading from the N-terminus, the 178-residue chain is Large ribosomal subunit protein uL6 (178 aa).

The protein belongs to the universal ribosomal protein uL6 family. Part of the 50S ribosomal subunit.

This protein binds to the 23S rRNA, and is important in its secondary structure. It is located near the subunit interface in the base of the L7/L12 stalk, and near the tRNA binding site of the peptidyltransferase center. This is Large ribosomal subunit protein uL6 from Streptococcus thermophilus (strain CNRZ 1066).